We begin with the raw amino-acid sequence, 427 residues long: Glutamate-1-semialdehyde 2,1-aminomutase (427 aa).

K268 bears the N6-(pyridoxal phosphate)lysine mark.

This sequence belongs to the class-III pyridoxal-phosphate-dependent aminotransferase family. HemL subfamily. It depends on pyridoxal 5'-phosphate as a cofactor.

It localises to the cytoplasm. The catalysed reaction is (S)-4-amino-5-oxopentanoate = 5-aminolevulinate. Its pathway is porphyrin-containing compound metabolism; protoporphyrin-IX biosynthesis; 5-aminolevulinate from L-glutamyl-tRNA(Glu): step 2/2. This is Glutamate-1-semialdehyde 2,1-aminomutase from Methanococcus vannielii (strain ATCC 35089 / DSM 1224 / JCM 13029 / OCM 148 / SB).